We begin with the raw amino-acid sequence, 331 residues long: 5-dehydro-2-deoxygluconokinase (331 aa).

This sequence belongs to the carbohydrate kinase PfkB family.

It catalyses the reaction 5-dehydro-2-deoxy-D-gluconate + ATP = 6-phospho-5-dehydro-2-deoxy-D-gluconate + ADP + H(+). The protein operates within polyol metabolism; myo-inositol degradation into acetyl-CoA; acetyl-CoA from myo-inositol: step 5/7. Catalyzes the phosphorylation of 5-dehydro-2-deoxy-D-gluconate (2-deoxy-5-keto-D-gluconate or DKG) to 6-phospho-5-dehydro-2-deoxy-D-gluconate (DKGP). This chain is 5-dehydro-2-deoxygluconokinase, found in Halalkalibacterium halodurans (strain ATCC BAA-125 / DSM 18197 / FERM 7344 / JCM 9153 / C-125) (Bacillus halodurans).